A 39-amino-acid polypeptide reads, in one-letter code: Photosystem II reaction center protein L (39 aa).

A helical membrane pass occupies residues 18–38; the sequence is SLYLGLLFVFVTGVLMSSYFF.

The protein belongs to the PsbL family. As to quaternary structure, PSII is composed of 1 copy each of membrane proteins PsbA, PsbB, PsbC, PsbD, PsbE, PsbF, PsbH, PsbI, PsbJ, PsbK, PsbL, PsbM, PsbT, PsbX, PsbY, PsbZ, Psb30/Ycf12, peripheral proteins PsbO, CyanoQ (PsbQ), PsbU, PsbV and a large number of cofactors. It forms dimeric complexes.

The protein localises to the cellular thylakoid membrane. One of the components of the core complex of photosystem II (PSII). PSII is a light-driven water:plastoquinone oxidoreductase that uses light energy to abstract electrons from H(2)O, generating O(2) and a proton gradient subsequently used for ATP formation. It consists of a core antenna complex that captures photons, and an electron transfer chain that converts photonic excitation into a charge separation. This subunit is found at the monomer-monomer interface and is required for correct PSII assembly and/or dimerization. The chain is Photosystem II reaction center protein L from Synechococcus sp. (strain CC9605).